Reading from the N-terminus, the 346-residue chain is UPF0053 protein sll1254 (346 aa).

The next 4 helical transmembrane spans lie at 1–21, 58–78, 87–107, and 121–141; these read MLEI…CSCA, IGTI…TIGA, AWMG…GEII, and LLIA…VWLI. In terms of domain architecture, CNNM transmembrane spans 1-179; the sequence is MLEIVAAIFI…YKEGVIEGDE (179 aa). 2 CBS domains span residues 198–259 and 263–320; these read MTPR…GYKT and LARP…IVDE.

Belongs to the UPF0053 family.

It localises to the cell membrane. The protein is UPF0053 protein sll1254 of Synechocystis sp. (strain ATCC 27184 / PCC 6803 / Kazusa).